The primary structure comprises 204 residues: Holliday junction branch migration complex subunit RuvA (204 aa).

Residues 1-63 (MIASLRGTVI…EDAMKLYGFI (63 aa)) form a domain I region. The segment at 64–142 (DDQSREMFAL…AYTVGVVDDG (79 aa)) is domain II. The interval 143–151 (APTAPTQGV) is flexible linker. Residues 152-204 (APVVVVDQVTQALTGLGFTEKQADDAVAAVLSADPGLDTSAALRAALAKLGGK) form a domain III region.

The protein belongs to the RuvA family. Homotetramer. Forms an RuvA(8)-RuvB(12)-Holliday junction (HJ) complex. HJ DNA is sandwiched between 2 RuvA tetramers; dsDNA enters through RuvA and exits via RuvB. An RuvB hexamer assembles on each DNA strand where it exits the tetramer. Each RuvB hexamer is contacted by two RuvA subunits (via domain III) on 2 adjacent RuvB subunits; this complex drives branch migration. In the full resolvosome a probable DNA-RuvA(4)-RuvB(12)-RuvC(2) complex forms which resolves the HJ.

It localises to the cytoplasm. Functionally, the RuvA-RuvB-RuvC complex processes Holliday junction (HJ) DNA during genetic recombination and DNA repair, while the RuvA-RuvB complex plays an important role in the rescue of blocked DNA replication forks via replication fork reversal (RFR). RuvA specifically binds to HJ cruciform DNA, conferring on it an open structure. The RuvB hexamer acts as an ATP-dependent pump, pulling dsDNA into and through the RuvAB complex. HJ branch migration allows RuvC to scan DNA until it finds its consensus sequence, where it cleaves and resolves the cruciform DNA. This chain is Holliday junction branch migration complex subunit RuvA, found in Corynebacterium efficiens (strain DSM 44549 / YS-314 / AJ 12310 / JCM 11189 / NBRC 100395).